A 425-amino-acid chain; its full sequence is Serine--tRNA ligase (425 aa).

L-serine is bound at residue 233 to 235; it reads TAE. Residue 264 to 266 coordinates ATP; sequence RRE. Residue E287 participates in L-serine binding. An ATP-binding site is contributed by 351–354; sequence EISS. S385 contacts L-serine.

The protein belongs to the class-II aminoacyl-tRNA synthetase family. Type-1 seryl-tRNA synthetase subfamily. As to quaternary structure, homodimer. The tRNA molecule binds across the dimer.

The protein localises to the cytoplasm. The enzyme catalyses tRNA(Ser) + L-serine + ATP = L-seryl-tRNA(Ser) + AMP + diphosphate + H(+). It catalyses the reaction tRNA(Sec) + L-serine + ATP = L-seryl-tRNA(Sec) + AMP + diphosphate + H(+). The protein operates within aminoacyl-tRNA biosynthesis; selenocysteinyl-tRNA(Sec) biosynthesis; L-seryl-tRNA(Sec) from L-serine and tRNA(Sec): step 1/1. Catalyzes the attachment of serine to tRNA(Ser). Is also able to aminoacylate tRNA(Sec) with serine, to form the misacylated tRNA L-seryl-tRNA(Sec), which will be further converted into selenocysteinyl-tRNA(Sec). This Prochlorococcus marinus (strain AS9601) protein is Serine--tRNA ligase.